We begin with the raw amino-acid sequence, 305 residues long: Dioxygenase hkm4 (305 aa).

Fe cation is bound by residues His140, Asp142, and His216.

The protein belongs to the PhyH family. Fe cation is required as a cofactor.

The protein operates within secondary metabolite biosynthesis. In terms of biological role, dioxygenase; part of the gene cluster that mediates the biosynthesis of hancockiamides, an unusual new family of N-cinnamoylated piperazines. The NRPS hkm10 and the NmrA-like reductase hkm9 are proposed to convert two molecules of L-Phe to the intermediary piperazine called xenocockiamide A. Xenocockiamide A is then converted to hancockiamide D via a series of hydroxylations and O-methylations. The tyrosinase hkm6 may catalyze an aromatic hydroxylation, then the 2-oxoglutarate-dependent Fe(II) dioxygenase hkm4 and the FAD-dependent phenol hydroxylase hkm7 may catalyze consecutive hydroxylations to install 2 more hydroxy groups, and the methyltransferase hkm8 probably catalyzes two methylations using 2 molecules of S-adenosyl-L-methionine (SAM). The NRPS hkm11 activates and transfers trans-cinnamate supplied by the PAL hkm12 to hancockiamide D and produces hancockiamide A. NRPS Hkm11 has the flexibility to tolerate the bulky hancockiamide G as a substrate and the absence of the acetyl-transferase hkm3 opens up the opportunity for hkm11 to introduce a second N-cinnamoyl moiety. The cytochrome P450 monooxygenase hkm5 catalyzes the methylenedioxy bridge formation, converting hancockiamide A into hancockiamide G. Hkm5 can also convert hancockiamide B into hancockiamide C, and hancockiamide D into hancockiamide H. The N-acetyltransferase hkm3 finally transfers an acetyl group to 1-N of piperazine, converting hancockiamide A into hancockiamide B and hancockiamide G into hancockiamide C. In Aspergillus hancockii, this protein is Dioxygenase hkm4.